A 275-amino-acid chain; its full sequence is Succinate dehydrogenase [ubiquinone] iron-sulfur subunit, mitochondrial (275 aa).

A mitochondrion-targeting transit peptide spans 1-24; that stretch reads MFSRRIQVLSPFLKHFVNRNARMM. Positions 57 to 137 constitute a 2Fe-2S ferredoxin-type domain; sequence PEVKPKLQKY…PTKIYPLPHC (81 aa). 4 residues coordinate [2Fe-2S] cluster: cysteine 98, cysteine 103, cysteine 106, and cysteine 118. Residues 178–208 enclose the 4Fe-4S ferredoxin-type domain; sequence DRAKLDGLYECILCACCSTSCPSYWWNSEEY. 3 residues coordinate [4Fe-4S] cluster: cysteine 188, cysteine 191, and cysteine 194. [3Fe-4S] cluster is bound at residue cysteine 198. Residue tryptophan 203 coordinates a ubiquinone. Cysteine 245 and cysteine 251 together coordinate [3Fe-4S] cluster. Cysteine 255 contributes to the [4Fe-4S] cluster binding site.

Belongs to the succinate dehydrogenase/fumarate reductase iron-sulfur protein family. In terms of assembly, component of complex II composed of four subunits: a flavoprotein (FP), an iron-sulfur protein (IP), and a cytochrome b composed of a large and a small subunit. [2Fe-2S] cluster serves as cofactor. It depends on [3Fe-4S] cluster as a cofactor. [4Fe-4S] cluster is required as a cofactor.

It is found in the mitochondrion inner membrane. It carries out the reaction a quinone + succinate = fumarate + a quinol. It functions in the pathway carbohydrate metabolism; tricarboxylic acid cycle; fumarate from succinate (eukaryal route): step 1/1. Its function is as follows. Iron-sulfur protein (IP) subunit of succinate dehydrogenase (SDH) that is involved in complex II of the mitochondrial electron transport chain and is responsible for transferring electrons from succinate to ubiquinone (coenzyme Q). The protein is Succinate dehydrogenase [ubiquinone] iron-sulfur subunit, mitochondrial (sdh2) of Schizosaccharomyces pombe (strain 972 / ATCC 24843) (Fission yeast).